The following is a 338-amino-acid chain: Uroporphyrinogen decarboxylase (338 aa).

Substrate contacts are provided by residues 23–27, D72, Y146, T201, and H312; that span reads RQAGR.

Belongs to the uroporphyrinogen decarboxylase family. As to quaternary structure, homodimer.

It is found in the cytoplasm. The enzyme catalyses uroporphyrinogen III + 4 H(+) = coproporphyrinogen III + 4 CO2. It participates in porphyrin-containing compound metabolism; protoporphyrin-IX biosynthesis; coproporphyrinogen-III from 5-aminolevulinate: step 4/4. Functionally, catalyzes the decarboxylation of four acetate groups of uroporphyrinogen-III to yield coproporphyrinogen-III. In Thermodesulfovibrio yellowstonii (strain ATCC 51303 / DSM 11347 / YP87), this protein is Uroporphyrinogen decarboxylase.